Reading from the N-terminus, the 1089-residue chain is SUMO-specific isopeptidase USPL1 (1089 aa).

The disordered stretch occupies residues 90–128 (LISPDSEDCPTPSKPQKRKRLETNCRNSPLPVHSKKTRS). Positions 215–488 (VQWKNTQALC…ETHIVIWERK (274 aa)) constitute a USP domain. Cysteine 224 serves as the catalytic Nucleophile. Residues 224–483 (CWLDCILSAL…EVPASETHIV (260 aa)) are SUMO-binding. Histidine 444 acts as the Proton acceptor in catalysis. 4 disordered regions span residues 687 to 739 (DSQT…KEDQ), 791 to 817 (ISRR…SPPL), 835 to 868 (LREQ…AAED), and 891 to 928 (LISS…CGSP). The segment covering 719–733 (TASSKTVAARSAQNQ) has biased composition (polar residues). Positions 791 to 803 (ISRRSKRMSRKAK) are enriched in basic residues. Serine 894 is modified (phosphoserine). Residues 895-907 (PHREPSLSDHSEP) show a composition bias toward basic and acidic residues.

Belongs to the peptidase C19 family. As to quaternary structure, interacts with ELL.

It localises to the nucleus. The protein resides in the cajal body. Functionally, SUMO-specific isopeptidase involved in protein desumoylation. Specifically binds SUMO proteins with a higher affinity for SUMO2 and SUMO3 which it cleaves more efficiently. Also able to process full-length SUMO proteins to their mature forms. Plays a key role in RNA polymerase-II-mediated snRNA transcription in the Cajal bodies. Is a component of complexes that can bind to U snRNA genes. The polypeptide is SUMO-specific isopeptidase USPL1 (Uspl1) (Mus musculus (Mouse)).